A 505-amino-acid polypeptide reads, in one-letter code: Lysine--tRNA ligase (505 aa).

Over residues 1–11 the composition is skewed to polar residues; the sequence is MSDQQLDQPSL. Residues 1 to 23 are disordered; the sequence is MSDQQLDQPSLSHEERQHEENKL. Residues 12-23 are compositionally biased toward basic and acidic residues; the sequence is SHEERQHEENKL. Residues glutamate 415 and glutamate 422 each contribute to the Mg(2+) site.

It belongs to the class-II aminoacyl-tRNA synthetase family. Homodimer. The cofactor is Mg(2+).

It is found in the cytoplasm. It catalyses the reaction tRNA(Lys) + L-lysine + ATP = L-lysyl-tRNA(Lys) + AMP + diphosphate. This chain is Lysine--tRNA ligase, found in Ectopseudomonas mendocina (strain ymp) (Pseudomonas mendocina).